The primary structure comprises 630 residues: 1,4-alpha-glucan branching enzyme GlgB (630 aa).

The active-site Nucleophile is the D308. The active-site Proton donor is E361.

It belongs to the glycosyl hydrolase 13 family. GlgB subfamily. Monomer.

The catalysed reaction is Transfers a segment of a (1-&gt;4)-alpha-D-glucan chain to a primary hydroxy group in a similar glucan chain.. It participates in glycan biosynthesis; glycogen biosynthesis. Functionally, catalyzes the formation of the alpha-1,6-glucosidic linkages in glycogen by scission of a 1,4-alpha-linked oligosaccharide from growing alpha-1,4-glucan chains and the subsequent attachment of the oligosaccharide to the alpha-1,6 position. In Halothermothrix orenii (strain H 168 / OCM 544 / DSM 9562), this protein is 1,4-alpha-glucan branching enzyme GlgB.